The following is a 424-amino-acid chain: Histidine--tRNA ligase (424 aa).

The protein belongs to the class-II aminoacyl-tRNA synthetase family. As to quaternary structure, homodimer.

The protein resides in the cytoplasm. The catalysed reaction is tRNA(His) + L-histidine + ATP = L-histidyl-tRNA(His) + AMP + diphosphate + H(+). In Pectobacterium carotovorum subsp. carotovorum (strain PC1), this protein is Histidine--tRNA ligase.